We begin with the raw amino-acid sequence, 200 residues long: Peptidyl-tRNA hydrolase (200 aa).

Position 15 (Y15) interacts with tRNA. H20 acts as the Proton acceptor in catalysis. TRNA contacts are provided by F66, N68, and N114.

Belongs to the PTH family. In terms of assembly, monomer.

It localises to the cytoplasm. It catalyses the reaction an N-acyl-L-alpha-aminoacyl-tRNA + H2O = an N-acyl-L-amino acid + a tRNA + H(+). In terms of biological role, hydrolyzes ribosome-free peptidyl-tRNAs (with 1 or more amino acids incorporated), which drop off the ribosome during protein synthesis, or as a result of ribosome stalling. Functionally, catalyzes the release of premature peptidyl moieties from peptidyl-tRNA molecules trapped in stalled 50S ribosomal subunits, and thus maintains levels of free tRNAs and 50S ribosomes. This is Peptidyl-tRNA hydrolase from Ralstonia nicotianae (strain ATCC BAA-1114 / GMI1000) (Ralstonia solanacearum).